The primary structure comprises 817 residues: ABC transporter G family member STR (817 aa).

The tract at residues 1-30 (MARLERDGTNKSLESLMDSHKPGGTTTNLN) is disordered. At 1–542 (MARLERDGTN…RTVLNVIRTP (542 aa)) the chain is on the cytoplasmic side. An ABC transporter domain is found at 43 to 294 (LEFTNLSYSI…LSGFGRPVPD (252 aa)). Position 87–94 (87–94 (GPSGAGKS)) interacts with ATP. Disordered regions lie at residues 321–349 (QYQH…RRNT), 362–395 (GFTA…LERR), and 439–463 (RPPS…GPRS). Positions 362 to 375 (GFTAGTPQPDSSQF) are enriched in polar residues. Residues 377-388 (LDDDDNDDDENF) show a composition bias toward acidic residues. The chain crosses the membrane as a helical span at residues 543-563 (ELFASREIVLTVMALVLSTIF). Topologically, residues 564 to 579 (KNLGDTTFIDINRLLN) are extracellular. A helical membrane pass occupies residues 580 to 600 (FYIFAVCLVFFSSNDAVPSFI). At 601 to 621 (MERFIFIRETSHNAYRASSYV) the chain is on the cytoplasmic side. The helical transmembrane segment at 622 to 642 (ISSLIVYLPFFAVQGLTFAVI) threads the bilayer. The Extracellular segment spans residues 643–657 (TKLMLHLKSNLFNFW). Residues 658 to 678 (MILFASLITTNAYVMLVSALV) traverse the membrane as a helical segment. Residues 679 to 681 (PSY) are Cytoplasmic-facing. The chain crosses the membrane as a helical span at residues 682-702 (ITGYAVVIATTALFFLTCGFF). The Extracellular segment spans residues 703–787 (LKRTQIPAYW…TMDITMESLW (85 aa)). Asn-762 carries an N-linked (GlcNAc...) asparagine glycan. The chain crosses the membrane as a helical span at residues 788-808 (YDILILLAWGVLYRFFFYLVL). The Cytoplasmic portion of the chain corresponds to 809–817 (RFYSKNERK).

This sequence belongs to the ABC transporter superfamily. ABCG family. Stunted arbuscule (STR) subfamily. Heterodimerizes with STR2; the resulting transporter is located in the peri-arbuscular membrane. Expressed constitutively in the vascular tissue of roots.

It localises to the cell membrane. Functionally, together with STR2, required for arbuscule development in arbuscular mycorrhizal (AM) symbiosis. The polypeptide is ABC transporter G family member STR (Medicago truncatula (Barrel medic)).